The primary structure comprises 95 residues: Large ribosomal subunit protein bL25 (95 aa).

This sequence belongs to the bacterial ribosomal protein bL25 family. In terms of assembly, part of the 50S ribosomal subunit; part of the 5S rRNA/L5/L18/L25 subcomplex. Contacts the 5S rRNA. Binds to the 5S rRNA independently of L5 and L18.

This is one of the proteins that binds to the 5S RNA in the ribosome where it forms part of the central protuberance. The sequence is that of Large ribosomal subunit protein bL25 from Mannheimia succiniciproducens (strain KCTC 0769BP / MBEL55E).